The following is a 218-amino-acid chain: Cytochrome b6 (218 aa).

Residues 35-55 (IFYCLGGITLVCFLIQFATGF) form a helical membrane-spanning segment. Cys-38 lines the heme c pocket. Heme b contacts are provided by His-89 and His-103. A run of 3 helical transmembrane segments spans residues 93-113 (ASMM…TGGF), 119-139 (LTWV…VTGY), and 189-209 (LHTF…FLMI). Heme b-binding residues include His-190 and His-205.

Belongs to the cytochrome b family. PetB subfamily. As to quaternary structure, the 4 large subunits of the cytochrome b6-f complex are cytochrome b6, subunit IV (17 kDa polypeptide, PetD), cytochrome f and the Rieske protein, while the 4 small subunits are PetG, PetL, PetM and PetN. The complex functions as a dimer. It depends on heme b as a cofactor. Heme c is required as a cofactor.

The protein resides in the cellular thylakoid membrane. Functionally, component of the cytochrome b6-f complex, which mediates electron transfer between photosystem II (PSII) and photosystem I (PSI), cyclic electron flow around PSI, and state transitions. The chain is Cytochrome b6 from Prochlorococcus marinus (strain MIT 9215).